A 330-amino-acid chain; its full sequence is Ketol-acid reductoisomerase (NADP(+)) (330 aa).

Residues Met1–Thr181 form the KARI N-terminal Rossmann domain. Residues Tyr24–Gln27, Lys47, Ser50, Ser52, and Asp82–Gln85 each bind NADP(+). Residue His107 is part of the active site. Gly133 lines the NADP(+) pocket. A KARI C-terminal knotted domain is found at Ser182 to Leu327. Mg(2+) is bound by residues Asp190, Glu194, Glu226, and Glu230. Ser251 provides a ligand contact to substrate.

The protein belongs to the ketol-acid reductoisomerase family. Mg(2+) is required as a cofactor.

It catalyses the reaction (2R)-2,3-dihydroxy-3-methylbutanoate + NADP(+) = (2S)-2-acetolactate + NADPH + H(+). It carries out the reaction (2R,3R)-2,3-dihydroxy-3-methylpentanoate + NADP(+) = (S)-2-ethyl-2-hydroxy-3-oxobutanoate + NADPH + H(+). It participates in amino-acid biosynthesis; L-isoleucine biosynthesis; L-isoleucine from 2-oxobutanoate: step 2/4. The protein operates within amino-acid biosynthesis; L-valine biosynthesis; L-valine from pyruvate: step 2/4. Its function is as follows. Involved in the biosynthesis of branched-chain amino acids (BCAA). Catalyzes an alkyl-migration followed by a ketol-acid reduction of (S)-2-acetolactate (S2AL) to yield (R)-2,3-dihydroxy-isovalerate. In the isomerase reaction, S2AL is rearranged via a Mg-dependent methyl migration to produce 3-hydroxy-3-methyl-2-ketobutyrate (HMKB). In the reductase reaction, this 2-ketoacid undergoes a metal-dependent reduction by NADPH to yield (R)-2,3-dihydroxy-isovalerate. This chain is Ketol-acid reductoisomerase (NADP(+)), found in Chlorobaculum tepidum (strain ATCC 49652 / DSM 12025 / NBRC 103806 / TLS) (Chlorobium tepidum).